A 314-amino-acid polypeptide reads, in one-letter code: Acetyl-coenzyme A carboxylase carboxyl transferase subunit beta, chloroplastic (314 aa).

The CoA carboxyltransferase N-terminal domain maps to 47–314; sequence LWTRCDNCEN…APWKEKNNQV (268 aa). Zn(2+)-binding residues include C51, C54, C70, and C73. The C4-type zinc-finger motif lies at 51–73; the sequence is CDNCENMLYIKFLKQNKGVCEEC.

It belongs to the AccD/PCCB family. Acetyl-CoA carboxylase is a heterohexamer composed of biotin carboxyl carrier protein, biotin carboxylase and 2 subunits each of ACCase subunit alpha and ACCase plastid-coded subunit beta (accD). Zn(2+) serves as cofactor.

It localises to the plastid. It is found in the chloroplast stroma. It catalyses the reaction N(6)-carboxybiotinyl-L-lysyl-[protein] + acetyl-CoA = N(6)-biotinyl-L-lysyl-[protein] + malonyl-CoA. Its pathway is lipid metabolism; malonyl-CoA biosynthesis; malonyl-CoA from acetyl-CoA: step 1/1. Component of the acetyl coenzyme A carboxylase (ACC) complex. Biotin carboxylase (BC) catalyzes the carboxylation of biotin on its carrier protein (BCCP) and then the CO(2) group is transferred by the transcarboxylase to acetyl-CoA to form malonyl-CoA. In Angiopteris lygodiifolia (Turnip fern), this protein is Acetyl-coenzyme A carboxylase carboxyl transferase subunit beta, chloroplastic.